Here is a 214-residue protein sequence, read N- to C-terminus: UPF0758 protein (214 aa).

The MPN domain maps to Val-92 to Leu-214. Zn(2+)-binding residues include His-163, His-165, and Asp-176. The JAMM motif motif lies at His-163 to Asp-176.

This sequence belongs to the UPF0758 family.

The protein is UPF0758 protein of Rhodobacter capsulatus (Rhodopseudomonas capsulata).